Here is a 117-residue protein sequence, read N- to C-terminus: MPLYEHVMIARQDLSNTQAEGLIEHFGAVLSDNGGSLVDHEYWGVKTMAYKINKNRKGHYAFLRTDAPASAVQEMERLMRLHDDVMRVLTIKVDEHAEGPSVQMQKRDERDSRRERR.

Positions 96 to 117 (HAEGPSVQMQKRDERDSRRERR) are disordered. Positions 105–117 (QKRDERDSRRERR) are enriched in basic and acidic residues.

It belongs to the bacterial ribosomal protein bS6 family.

Binds together with bS18 to 16S ribosomal RNA. This is Small ribosomal subunit protein bS6 from Ruegeria pomeroyi (strain ATCC 700808 / DSM 15171 / DSS-3) (Silicibacter pomeroyi).